The chain runs to 182 residues: Large ribosomal subunit protein uL16 (182 aa).

Belongs to the universal ribosomal protein uL16 family.

This Thermococcus gammatolerans (strain DSM 15229 / JCM 11827 / EJ3) protein is Large ribosomal subunit protein uL16.